Here is a 553-residue protein sequence, read N- to C-terminus: MKKGSAVIKTLRVILSALALCVATSSAHAADTKKVDVLLVGGGIMSSTLGVWLHELQPDWSMTMVERLDGVALESSNGWNNAGTGHSALAELNYTPEKADGKIDISKAIEINESFQISRQFWAWQVKQGVLKNPHSFINSTPHMSFVWGDDNVRFLKKRYEALQASPLFRGMQYSEDYDQIKQWVPLMMEGRDPKQKVAATWTPIGTDVNFGEITRQFVGYLKTQPNFTLSLSSEVREISRNADGTWHVSWVKLHSDEPAQSVDAKFVFIGAGGGALHLLQASGVPEAKDYGAFPVGGSFLVTENPEVVKQHLAKAYGKASVGSPPMSVPHLDTRIIDGKKIILFGPFATFSTKFLKNGSYFDLLKSTNTHNVAPMMRVGVDEFPLVQYLAGQLMLSDDDRFNALKEYFPNAKKEDWRLWQAGQRVQIIKRDPVKGGVLKLGTEIVASQDGSIAGLLGASPGASTAAPIMLNLMKKVFKDKVATPEWQQKIRQIVPSYGTKLNDSPAKVVEEWTYTSDVLQLSPPPKIDVNTPSQATGTAPARPAKASADMAL.

The tract at residues 524-553 (PPPKIDVNTPSQATGTAPARPAKASADMAL) is disordered.

It belongs to the MQO family. The cofactor is FAD.

The catalysed reaction is (S)-malate + a quinone = a quinol + oxaloacetate. The protein operates within carbohydrate metabolism; tricarboxylic acid cycle; oxaloacetate from (S)-malate (quinone route): step 1/1. In Burkholderia lata (strain ATCC 17760 / DSM 23089 / LMG 22485 / NCIMB 9086 / R18194 / 383), this protein is Probable malate:quinone oxidoreductase.